Here is a 374-residue protein sequence, read N- to C-terminus: Phosphate-binding protein PstS 1 (374 aa).

The signal sequence occupies residues 1-23 (MKIRLHTLLAVLTAAPLLLAAAG). Residue C24 is the site of N-palmitoyl cysteine attachment. C24 carries S-diacylglycerol cysteine lipidation. Residues 25–48 (GSKPPSGSPETGAGAGTVATTPAS) are disordered. Phosphate contacts are provided by residues 58–60 (STL), S88, D106, and 189–191 (SGD).

Belongs to the PstS family. In terms of assembly, the complex is composed of two ATP-binding proteins (PstB), two transmembrane proteins (PstC and PstA) and a solute-binding protein (PstS).

It is found in the cell membrane. Functionally, part of the ABC transporter complex PstSACB involved in phosphate import. The sequence is that of Phosphate-binding protein PstS 1 (pstS1) from Mycobacterium tuberculosis (strain CDC 1551 / Oshkosh).